The following is a 208-amino-acid chain: Putative archaetidylserine decarboxylase proenzyme (208 aa).

Ser-172 functions as the Schiff-base intermediate with substrate; via pyruvic acid in the catalytic mechanism. Ser-172 is modified (pyruvic acid (Ser); by autocatalysis).

The protein belongs to the phosphatidylserine decarboxylase family. PSD-A subfamily. As to quaternary structure, heterodimer of a large membrane-associated beta subunit and a small pyruvoyl-containing alpha subunit. It depends on pyruvate as a cofactor. Is synthesized initially as an inactive proenzyme. Formation of the active enzyme involves a self-maturation process in which the active site pyruvoyl group is generated from an internal serine residue via an autocatalytic post-translational modification. Two non-identical subunits are generated from the proenzyme in this reaction, and the pyruvate is formed at the N-terminus of the alpha chain, which is derived from the carboxyl end of the proenzyme. The post-translation cleavage follows an unusual pathway, termed non-hydrolytic serinolysis, in which the side chain hydroxyl group of the serine supplies its oxygen atom to form the C-terminus of the beta chain, while the remainder of the serine residue undergoes an oxidative deamination to produce ammonia and the pyruvoyl prosthetic group on the alpha chain.

It is found in the cell membrane. It carries out the reaction archaetidylserine + H(+) = archaetidylethanolamine + CO2. In terms of biological role, catalyzes the formation of archaetidylethanolamine (PtdEtn) from archaetidylserine (PtdSer). The protein is Putative archaetidylserine decarboxylase proenzyme of Methanosarcina mazei (strain ATCC BAA-159 / DSM 3647 / Goe1 / Go1 / JCM 11833 / OCM 88) (Methanosarcina frisia).